Here is a 393-residue protein sequence, read N- to C-terminus: Stearoyl-[acyl-carrier-protein] 9-desaturase, chloroplastic (393 aa).

A chloroplast-targeting transit peptide spans 1–30; it reads MALNINGVSLKSHKMLPFPCSSARSERVFM. Fe cation-binding residues include Glu-135, Glu-173, His-176, Glu-259, and His-262.

This sequence belongs to the fatty acid desaturase type 2 family. Homodimer. Fe(2+) is required as a cofactor.

It is found in the plastid. It localises to the chloroplast. It carries out the reaction octadecanoyl-[ACP] + 2 reduced [2Fe-2S]-[ferredoxin] + O2 + 2 H(+) = (9Z)-octadecenoyl-[ACP] + 2 oxidized [2Fe-2S]-[ferredoxin] + 2 H2O. The protein operates within lipid metabolism; fatty acid metabolism. Converts stearoyl-ACP to oleoyl-ACP by introduction of a cis double bond between carbons 9 and 10 of the acyl chain. This Solanum tuberosum (Potato) protein is Stearoyl-[acyl-carrier-protein] 9-desaturase, chloroplastic.